Here is a 427-residue protein sequence, read N- to C-terminus: MSYREYRDRVLNFIEDHEHWRAHTINLIASENVTSPSVTRAVASGFMHKYAEGWPRQRYYQGCKYVDEVELIGVELFTKLFGSDFADLRPISGTNANQAAFFGLTQPGDKAIVLHTSHGGHISHMPFGAAGMRGLEVHTWPFDNEAFNIDVDKAEKLIRELEPKIVVFGGSLFPFPHPVKELAPVAKEVGAYVMYDAAHVLGLIAGKQFQDPLREGADIITASTHKTFPGPQGGVILYKKFGETEEIAKLQWAIFPGVLSNHHLHHMAGKVITAAEMLEYGEKYAAQVVKNAKALAEALAEEGFKVIGEDKGYTESHQVIVDVSDLHPAAGGWAAPLLEEAGIILNKNLLPWDPLEKVNEPSGLRIGVQEMTRVGMFEDDMKEIAHFIRRVLIDKEDPKKVRRDVYGFRAEFQKVYYSFDHGLPLRE.

Residue 120 to 122 (GHI) participates in (6S)-5,6,7,8-tetrahydrofolate binding. Lys-226 is subject to N6-(pyridoxal phosphate)lysine. Glu-243 provides a ligand contact to (6S)-5,6,7,8-tetrahydrofolate.

Belongs to the SHMT family. As to quaternary structure, homodimer. The cofactor is pyridoxal 5'-phosphate.

The protein resides in the cytoplasm. It participates in amino-acid biosynthesis; glycine biosynthesis; glycine from L-serine: step 1/1. In terms of biological role, catalyzes the reversible interconversion of serine and glycine with a modified folate serving as the one-carbon carrier. Also exhibits a pteridine-independent aldolase activity toward beta-hydroxyamino acids, producing glycine and aldehydes, via a retro-aldol mechanism. This is Serine hydroxymethyltransferase from Thermococcus gammatolerans (strain DSM 15229 / JCM 11827 / EJ3).